The sequence spans 369 residues: Cell division protein FtsZ (369 aa).

GTP contacts are provided by residues 27 to 31, 119 to 121, E150, and N189; these read GAGNN and GTG.

It belongs to the FtsZ family. In terms of assembly, homodimer. Polymerizes to form a dynamic ring structure in a strictly GTP-dependent manner. Interacts directly with several other division proteins.

The protein resides in the cytoplasm. Essential cell division protein that forms a contractile ring structure (Z ring) at the future cell division site. The regulation of the ring assembly controls the timing and the location of cell division. One of the functions of the FtsZ ring is to recruit other cell division proteins to the septum to produce a new cell wall between the dividing cells. Binds GTP and shows GTPase activity. The polypeptide is Cell division protein FtsZ (Mycoplasma genitalium (strain ATCC 33530 / DSM 19775 / NCTC 10195 / G37) (Mycoplasmoides genitalium)).